A 115-amino-acid polypeptide reads, in one-letter code: T cell receptor beta variable 11-1 (115 aa).

The first 21 residues, 1-21 (MSTRLLCWMALCLLGAELSEA), serve as a signal peptide directing secretion. One can recognise an Ig-like domain in the interval 22–115 (EVAQSPRYKI…SAMYLCASSL (94 aa)). A disulfide bridge links Cys42 with Cys111.

Alpha-beta TR is a heterodimer composed of an alpha and beta chain; disulfide-linked. The alpha-beta TR is associated with the transmembrane signaling CD3 coreceptor proteins to form the TR-CD3 (TcR or TCR). The assembly of alpha-beta TR heterodimers with CD3 occurs in the endoplasmic reticulum where a single alpha-beta TR heterodimer associates with one CD3D-CD3E heterodimer, one CD3G-CD3E heterodimer and one CD247 homodimer forming a stable octameric structure. CD3D-CD3E and CD3G-CD3E heterodimers preferentially associate with TR alpha and TR beta chains, respectively. The association of the CD247 homodimer is the last step of TcR assembly in the endoplasmic reticulum and is required for transport to the cell surface.

The protein localises to the cell membrane. Its function is as follows. V region of the variable domain of T cell receptor (TR) beta chain that participates in the antigen recognition. Alpha-beta T cell receptors are antigen specific receptors which are essential to the immune response and are present on the cell surface of T lymphocytes. Recognize peptide-major histocompatibility (MH) (pMH) complexes that are displayed by antigen presenting cells (APC), a prerequisite for efficient T cell adaptive immunity against pathogens. Binding of alpha-beta TR to pMH complex initiates TR-CD3 clustering on the cell surface and intracellular activation of LCK that phosphorylates the ITAM motifs of CD3G, CD3D, CD3E and CD247 enabling the recruitment of ZAP70. In turn ZAP70 phosphorylates LAT, which recruits numerous signaling molecules to form the LAT signalosome. The LAT signalosome propagates signal branching to three major signaling pathways, the calcium, the mitogen-activated protein kinase (MAPK) kinase and the nuclear factor NF-kappa-B (NF-kB) pathways, leading to the mobilization of transcription factors that are critical for gene expression and essential for T cell growth and differentiation. The T cell repertoire is generated in the thymus, by V-(D)-J rearrangement. This repertoire is then shaped by intrathymic selection events to generate a peripheral T cell pool of self-MH restricted, non-autoaggressive T cells. Post-thymic interaction of alpha-beta TR with the pMH complexes shapes TR structural and functional avidity. The sequence is that of T cell receptor beta variable 11-1 from Homo sapiens (Human).